Here is a 73-residue protein sequence, read N- to C-terminus: Signaling peptide TAXIMIN 2 (73 aa).

A signal peptide spans 1–27; that stretch reads MGDCRPLGFLIGLPFALVALVLALVGA.

Confined to the vasculature of various organs, including seedling roots, leaves, cotyledons, sepals and petals. Also accumulates in root hair cells.

It is found in the secreted. In terms of biological role, signaling peptide involved in the regulation of lateral organs separation. The polypeptide is Signaling peptide TAXIMIN 2 (Arabidopsis thaliana (Mouse-ear cress)).